The sequence spans 658 residues: MATQRRDESPSGLSDIVEPDGLLGIGLTSRHIEAFGRKVTSTAGHLMGPITDSSNGGHYHTAMADIHRELRRPTTQRKVFSLTQTTPTDLVRSKLSTSEIQSRALSSLPDELLANIPEDSSSYSLFEGFKATQDDHEFRKAHRRRSSKGKKLLKDGEAAGALPSAPTDLKKERDLLSRRLDLMGVRKNMCSSEIHEIDNKIANLHNMRKIVLDRLAGLEMEEAELEHQLTEIDNKLEDIQEEAPKTPVTAATPKSSAVNDDSFVSEDAAMDASFMSESIYQKLPSHSPRSLKQRSIRKRSMPILHEHFAPGSQIKEMQAHTDMVTAIDFDYPFGTMVSAALDDTVRVWDLNIGRCTGFLEGHNASVRCLQVEDNIVATGSMDASVKLWDLSRARTVTRDNRLNKHEEGEGEDDNASDAFSLFSATTLEDCYVFSLDAHVDEVTALHFRGNTLISGSADKTLRQWDLVKGRCVQTLDVLWAAAQASTLAADTQWRPSGRLPDASADFVGALQCFDAALACGTADGMVRLWDLRSGQVHRSLVGHTGPITCLQFDEVHLVTGSQDRSIRIWDLRMGSIFDAYAYDKPITSMMFDTKRIVAAAGENVVKVYDKADGHHWDCGAGVGADESGPAPATVERVRLKDGYLLEGRKDGTVAAWTC.

A disordered region spans residues 138 to 170 (FRKAHRRRSSKGKKLLKDGEAAGALPSAPTDLK). The span at 139-151 (RKAHRRRSSKGKK) shows a compositional bias: basic residues. Residues 209 to 246 (KIVLDRLAGLEMEEAELEHQLTEIDNKLEDIQEEAPKT) adopt a coiled-coil conformation. 7 WD repeats span residues 319-360 (AHTD…GFLE), 361-398 (GHNA…TVTR), 437-476 (AHVD…QTLD), 482-539 (AQAS…VHRS), 542-581 (GHTG…DAYA), 583-618 (DKPI…HWDC), and 629-658 (PAPA…AWTC).

The protein belongs to the WD repeat MDV1/CAF4 family.

The protein localises to the mitochondrion outer membrane. Its function is as follows. Involved in mitochondrial fission. Acts as an adapter protein required to form mitochondrial fission complexes. Formation of these complexes is required to promote constriction and fission of the mitochondrial compartment at a late step in mitochondrial division. The chain is Mitochondrial division protein 1 (mdv1) from Neosartorya fischeri (strain ATCC 1020 / DSM 3700 / CBS 544.65 / FGSC A1164 / JCM 1740 / NRRL 181 / WB 181) (Aspergillus fischerianus).